Reading from the N-terminus, the 513-residue chain is ATP synthase subunit alpha (513 aa).

Residue glycine 170–threonine 177 coordinates ATP.

This sequence belongs to the ATPase alpha/beta chains family. F-type ATPases have 2 components, CF(1) - the catalytic core - and CF(0) - the membrane proton channel. CF(1) has five subunits: alpha(3), beta(3), gamma(1), delta(1), epsilon(1). CF(0) has three main subunits: a(1), b(2) and c(9-12). The alpha and beta chains form an alternating ring which encloses part of the gamma chain. CF(1) is attached to CF(0) by a central stalk formed by the gamma and epsilon chains, while a peripheral stalk is formed by the delta and b chains.

Its subcellular location is the cell inner membrane. The catalysed reaction is ATP + H2O + 4 H(+)(in) = ADP + phosphate + 5 H(+)(out). Its function is as follows. Produces ATP from ADP in the presence of a proton gradient across the membrane. The alpha chain is a regulatory subunit. The protein is ATP synthase subunit alpha of Teredinibacter turnerae (strain ATCC 39867 / T7901).